A 137-amino-acid polypeptide reads, in one-letter code: Large ribosomal subunit protein uL16c (137 aa).

Belongs to the universal ribosomal protein uL16 family. Part of the 50S ribosomal subunit.

It localises to the plastid. Its subcellular location is the chloroplast. This is Large ribosomal subunit protein uL16c from Thalassiosira pseudonana (Marine diatom).